The sequence spans 493 residues: Mitochondrial distribution and morphology protein 10 (493 aa).

It belongs to the MDM10 family. As to quaternary structure, component of the ER-mitochondria encounter structure (ERMES) or MDM complex, composed of MMM1, MDM10, MDM12 and MDM34. Associates with the mitochondrial outer membrane sorting assembly machinery SAM(core) complex, which consists of SAM35, SAM37 and SAM50, to form a SAM(holo) complex.

Its subcellular location is the mitochondrion outer membrane. Functionally, component of the ERMES/MDM complex, which serves as a molecular tether to connect the endoplasmic reticulum and mitochondria. Components of this complex are involved in the control of mitochondrial shape and protein biogenesis and may function in phospholipid exchange. MDM10 is involved in the late assembly steps of the general translocase of the mitochondrial outer membrane (TOM complex). Functions in the TOM40-specific route of the assembly of outer membrane beta-barrel proteins, including the association of TOM40 with the receptor TOM22 and small TOM proteins. Can associate with the SAM(core) complex as well as the MDM12-MMM1 complex, both involved in late steps of the major beta-barrel assembly pathway, that is responsible for biogenesis of all outer membrane beta-barrel proteins. May act as a switch that shuttles between both complexes and channels precursor proteins into the TOM40-specific pathway. Plays a role in mitochondrial morphology and in the inheritance of mitochondria. In Saccharomyces cerevisiae (strain YJM789) (Baker's yeast), this protein is Mitochondrial distribution and morphology protein 10.